The sequence spans 61 residues: MLNIFCLICICLNSTLYSSSFFFAKLPEAYAFFNPIIDVMPIIPVLFFLLAFVWQAAVSFR.

The propeptide occupies Met-1–Ala-24. The chain crosses the membrane as a helical span at residues Phe-32–Phe-52.

This sequence belongs to the PsbK family. In terms of assembly, PSII is composed of 1 copy each of membrane proteins PsbA, PsbB, PsbC, PsbD, PsbE, PsbF, PsbH, PsbI, PsbJ, PsbK, PsbL, PsbM, PsbT, PsbX, PsbY, PsbZ, Psb30/Ycf12, at least 3 peripheral proteins of the oxygen-evolving complex and a large number of cofactors. It forms dimeric complexes.

Its subcellular location is the plastid. The protein resides in the chloroplast thylakoid membrane. Its function is as follows. One of the components of the core complex of photosystem II (PSII). PSII is a light-driven water:plastoquinone oxidoreductase that uses light energy to abstract electrons from H(2)O, generating O(2) and a proton gradient subsequently used for ATP formation. It consists of a core antenna complex that captures photons, and an electron transfer chain that converts photonic excitation into a charge separation. This Phalaenopsis aphrodite subsp. formosana (Moth orchid) protein is Photosystem II reaction center protein K.